The chain runs to 208 residues: MGISRDHWHKRRATGGKRAPIRKKRKYELGRPAANTKLGPQRIHLVRSRGGNTKYRALRLDTGNFSWGSECSTRKSRIIDVVYNASNNELVRTKTLVKNAIVVVDATPFRQWYESHYLLPLGRKKGAKLTEAEDAIINKKRSQKTAKKYLARQRLSKVESALEEQFHTGRLLACVASRPGQCGRADGYILEGKELEFYLRKIKSKRAK.

Residues 1–34 (MGISRDHWHKRRATGGKRAPIRKKRKYELGRPAA) are disordered. Positions 7 to 26 (HWHKRRATGGKRAPIRKKRK) are enriched in basic residues.

Belongs to the eukaryotic ribosomal protein eS8 family. In terms of assembly, component of the small ribosomal subunit. Identified in a IGF2BP1-dependent mRNP granule complex containing untranslated mRNAs. Part of the small subunit (SSU) processome, composed of more than 70 proteins and the RNA chaperone small nucleolar RNA (snoRNA) U3.

The protein resides in the cytoplasm. Its subcellular location is the membrane. It is found in the nucleus. The protein localises to the nucleolus. In terms of biological role, component of the small ribosomal subunit. The ribosome is a large ribonucleoprotein complex responsible for the synthesis of proteins in the cell. Part of the small subunit (SSU) processome, first precursor of the small eukaryotic ribosomal subunit. During the assembly of the SSU processome in the nucleolus, many ribosome biogenesis factors, an RNA chaperone and ribosomal proteins associate with the nascent pre-rRNA and work in concert to generate RNA folding, modifications, rearrangements and cleavage as well as targeted degradation of pre-ribosomal RNA by the RNA exosome. This is Small ribosomal subunit protein eS8 (RpS8) from Spodoptera frugiperda (Fall armyworm).